The chain runs to 348 residues: WRKY transcription factor WRKY71 (348 aa).

The stretch at 50–84 forms a coiled coil; sequence VAALEAELKRMGAENRQLSEMLAAVAAKYEALQSQ. 2 disordered regions span residues 91 to 141 and 246 to 287; these read ASAN…APHH and GEHN…APVV. Positions 102–114 are enriched in low complexity; sequence NQSSTSEGGSVSP. Positions 116–122 match the Nuclear localization signal motif; sequence RKRKSES. Positions 126 to 136 are enriched in pro residues; sequence SPPPPPPPHPH. A DNA-binding region (WRKY) is located at residues 187 to 253; that stretch reads DLSLVVKDGY…YEGEHNHGQP (67 aa). The transcription repression of gibberellic acid (GA)-induced promoters stretch occupies residues 267 to 348; the sequence is SGKSAGKPPH…RILELSPTKD (82 aa). The segment covering 275–286 has biased composition (pro residues); sequence PHAPAAAPPAPV.

Belongs to the WRKY group II-a family. As to quaternary structure, interacts with WRKY51; this interaction promotes W box binding of the complex WRKY51/WRKY71 in a zinc ion-dependent manner. In terms of tissue distribution, highly expressed in aleurone cells. In seeds, predominantly present in the plumule, radicle and scutellum of the embryo. Expressed in roots, stems, young leaves and spikelets.

It is found in the nucleus. Its function is as follows. Transcription repressor. Interacts specifically with the W box (5'-(T)TGAC[CT]-3'), a frequently occurring elicitor-responsive cis-acting element. Represses specifically gibberellic acid (GA)-induced promoters in aleurone cells, probably by interfering with GAM1. Regulates, probably indirectly, the activation of defense-related genes such as GF14E during defense response. Modulates plant innate immunity against X.oryzae pv. oryzae (Xoo). Confers resistance to the virulent bacterial pathogen X.oryzae pv. oryzae (Xoo) 13751, probably via the regulation of NPR1 and PR1b defense signaling pathways. In Oryza sativa subsp. indica (Rice), this protein is WRKY transcription factor WRKY71.